We begin with the raw amino-acid sequence, 317 residues long: Small ribosomal subunit protein uS2 (317 aa).

N-acetylserine is present on S2. Laminin-binding stretches follow at residues 161-180 and 205-229; these read IPCN…MLAR and RDPE…EFQG. [DE]-W-[ST] repeat units lie at residues 230-232, 245-247, 288-290, 297-299, and 315-317; these read EWS and DWS. Residues 242 to 317 are laminin-binding; the sequence is EVPDWSEGVQ…DWGGSTAEWS (76 aa). Residues 278 to 317 form a disordered region; that stretch reads PGPTTEGYSEDWSAQPATEDWSAAPTAQAGDWGGSTAEWS.

It belongs to the universal ribosomal protein uS2 family. Monomer (37LRP) and homodimer (67LR). Component of the small ribosomal subunit. Mature ribosomes consist of a small (40S) and a large (60S) subunit. The 40S subunit contains about 33 different proteins and 1 molecule of RNA (18S). The 60S subunit contains about 49 different proteins and 3 molecules of RNA (28S, 5.8S and 5S). Interacts with rps21. Interacts with several laminins including at least lamb1. Interacts with mdk. Post-translationally, acylated. Acylation may be a prerequisite for conversion of the monomeric 37 kDa laminin receptor precursor (37LRP) to the mature dimeric 67 kDa laminin receptor (67LR), and may provide a mechanism for membrane association. In terms of processing, cleaved by stromelysin-3 (ST3) at the cell surface. Cleavage by stromelysin-3 may be a mechanism to alter cell-extracellular matrix interactions.

It is found in the cell membrane. It localises to the cytoplasm. Its subcellular location is the nucleus. Required for the assembly and/or stability of the 40S ribosomal subunit. Required for the processing of the 20S rRNA-precursor to mature 18S rRNA in a late step of the maturation of 40S ribosomal subunits. Also functions as a cell surface receptor for laminin. Plays a role in cell adhesion to the basement membrane and in the consequent activation of signaling transduction pathways. May play a role in cell fate determination and tissue morphogenesis. The polypeptide is Small ribosomal subunit protein uS2 (rpsa) (Ictalurus punctatus (Channel catfish)).